The following is a 429-amino-acid chain: Threonine synthase (429 aa).

Lys-107 carries the N6-(pyridoxal phosphate)lysine modification.

Belongs to the threonine synthase family. Pyridoxal 5'-phosphate serves as cofactor.

It carries out the reaction O-phospho-L-homoserine + H2O = L-threonine + phosphate. It participates in amino-acid biosynthesis; L-threonine biosynthesis; L-threonine from L-aspartate: step 5/5. Functionally, catalyzes the gamma-elimination of phosphate from L-phosphohomoserine and the beta-addition of water to produce L-threonine. The sequence is that of Threonine synthase (thrC) from Serratia marcescens.